We begin with the raw amino-acid sequence, 551 residues long: Protein PNS1 (551 aa).

The tract at residues 1–72 is disordered; it reads MSAQEFYQGG…TGGQPVYQDT (72 aa). At 1–94 the chain is on the cytoplasmic side; that stretch reads MSAQEFYQGG…RMNPRKRVND (94 aa). Residues 8–19 are compositionally biased toward low complexity; the sequence is QGGNQRGYQQQQ. A compositionally biased stretch (polar residues) spans 45-63; it reads PPNYNMKPSQPYASTNPET. A helical membrane pass occupies residues 95–115; sequence IIPLILFIAAVVGFAVVSGIA. The Extracellular portion of the chain corresponds to 116–147; it reads IHGFVQVNGLGGGMGDSSIGRTGSSITLDYHT. Residues 148–168 traverse the membrane as a helical segment; the sequence is VYLLLVVVALGLVIASLYLAA. Topologically, residues 169 to 177 are cytoplasmic; that stretch reads LRAFTKIIL. A helical membrane pass occupies residues 178–198; sequence EVTLALTVILNIGICIYYFII. Residues 199–200 are Extracellular-facing; that stretch reads QY. The helical transmembrane segment at 201 to 221 threads the bilayer; it reads WSGAIIFLIIALVSVFFYWGM. Residues 222-244 lie on the Cytoplasmic side of the membrane; that stretch reads RKRIPLAKLLLQTTIDVTKHHPS. A helical membrane pass occupies residues 245–265; it reads VYVVVFIGLIIQAAVSVWYTF. Over 266 to 307 the chain is Extracellular; sequence TCIAIYVKWTPGSAACSDGGCSSSKVAGLVFYATFSYLWLSQ. The chain crosses the membrane as a helical span at residues 308-328; it reads VIGNVILCTLAGGVFGGWYYY. Residues 329–356 are Cytoplasmic-facing; it reads GPRTPGGGVPKRASLLAFVRASTLSLGS. The chain crosses the membrane as a helical span at residues 357-377; the sequence is IAFGSLLVTILELLRLILQLF. Residues 378 to 386 are Extracellular-facing; sequence RQYEAGQGD. The chain crosses the membrane as a helical span at residues 387 to 407; it reads MIGSILICIAQCCIGCIQWMV. Residues 408–452 lie on the Cytoplasmic side of the membrane; sequence EYFNKYAYIEIALYGKSYIPAAKDTWRLLKDRGIDALVNDSLVGT. A helical membrane pass occupies residues 453 to 473; sequence ALMWGAYINGFLCAVLGYFYL. Residues 474 to 488 lie on the Extracellular side of the membrane; that stretch reads RFTHPAYNSDGQYSA. The helical transmembrane segment at 489-509 threads the bilayer; the sequence is PVILFSFLIGLNESFTVGSAI. At 510-551 the chain is on the cytoplasmic side; that stretch reads DAGVSTIFVGLGEDPMVLAERSPGLFEMIRQVYPRVVQGVPH.

Belongs to the CTL (choline transporter-like) family.

It is found in the cell membrane. In terms of biological role, probably involved in transport through the plasma membrane. This chain is Protein PNS1 (PNS1), found in Cryptococcus neoformans var. neoformans serotype D (strain B-3501A) (Filobasidiella neoformans).